The chain runs to 415 residues: Protein maelstrom homolog (415 aa).

The segment at residues Lys4–Asp73 is a DNA-binding region (HMG box). Positions Ser367 to Gly399 are disordered. Over residues Tyr372–Gly386 the composition is skewed to basic and acidic residues.

It belongs to the maelstrom family.

Its subcellular location is the cytoplasm. It is found in the nucleus. In terms of biological role, plays a central role during spermatogenesis by repressing transposable elements and preventing their mobilization, which is essential for the germline integrity. Acts via the piRNA metabolic process, which mediates the repression of transposable elements during meiosis by forming complexes composed of piRNAs and Piwi proteins and governs the methylation and subsequent repression of transposons. Its association with piP-bodies suggests a participation in the secondary piRNAs metabolic process. Required for the localization of germ-cell factors to the meiotic nuage. The sequence is that of Protein maelstrom homolog (mael) from Xenopus tropicalis (Western clawed frog).